Here is a 390-residue protein sequence, read N- to C-terminus: Protein MalY (390 aa).

The residue at position 233 (Lys233) is an N6-(pyridoxal phosphate)lysine.

This sequence belongs to the class-II pyridoxal-phosphate-dependent aminotransferase family. MalY/PatB cystathionine beta-lyase subfamily. In terms of assembly, homodimer. Interacts with MalT. It depends on pyridoxal 5'-phosphate as a cofactor.

It carries out the reaction L,L-cystathionine + H2O = L-homocysteine + pyruvate + NH4(+). The enzyme catalyses an S-substituted L-cysteine + H2O = a thiol + pyruvate + NH4(+). Functionally, acts as a beta-cystathionase and as a repressor of the maltose regulon. The polypeptide is Protein MalY (malY) (Escherichia coli (strain K12)).